The sequence spans 386 residues: Bifunctional enzyme IspD/IspF (386 aa).

The segment at methionine 1–proline 230 is 2-C-methyl-D-erythritol 4-phosphate cytidylyltransferase. A 2-C-methyl-D-erythritol 2,4-cyclodiphosphate synthase region spans residues arginine 231–glycine 386. Residues aspartate 237 and histidine 239 each contribute to the a divalent metal cation site. Residues aspartate 237–histidine 239 and histidine 263–serine 264 each bind 4-CDP-2-C-methyl-D-erythritol 2-phosphate. Histidine 271 provides a ligand contact to a divalent metal cation. 4-CDP-2-C-methyl-D-erythritol 2-phosphate-binding positions include aspartate 285–glycine 287, threonine 361–glutamate 364, and arginine 371.

It in the N-terminal section; belongs to the IspD/TarI cytidylyltransferase family. IspD subfamily. In the C-terminal section; belongs to the IspF family. A divalent metal cation serves as cofactor.

It carries out the reaction 2-C-methyl-D-erythritol 4-phosphate + CTP + H(+) = 4-CDP-2-C-methyl-D-erythritol + diphosphate. It catalyses the reaction 4-CDP-2-C-methyl-D-erythritol 2-phosphate = 2-C-methyl-D-erythritol 2,4-cyclic diphosphate + CMP. It participates in isoprenoid biosynthesis; isopentenyl diphosphate biosynthesis via DXP pathway; isopentenyl diphosphate from 1-deoxy-D-xylulose 5-phosphate: step 2/6. It functions in the pathway isoprenoid biosynthesis; isopentenyl diphosphate biosynthesis via DXP pathway; isopentenyl diphosphate from 1-deoxy-D-xylulose 5-phosphate: step 4/6. Functionally, bifunctional enzyme that catalyzes the formation of 4-diphosphocytidyl-2-C-methyl-D-erythritol from CTP and 2-C-methyl-D-erythritol 4-phosphate (MEP) (IspD), and catalyzes the conversion of 4-diphosphocytidyl-2-C-methyl-D-erythritol 2-phosphate (CDP-ME2P) to 2-C-methyl-D-erythritol 2,4-cyclodiphosphate (ME-CPP) with a corresponding release of cytidine 5-monophosphate (CMP) (IspF). This chain is Bifunctional enzyme IspD/IspF, found in Novosphingobium aromaticivorans (strain ATCC 700278 / DSM 12444 / CCUG 56034 / CIP 105152 / NBRC 16084 / F199).